Consider the following 305-residue polypeptide: U6 small nuclear RNA (adenine-(43)-N(6))-methyltransferase (305 aa).

5 residues coordinate S-adenosyl-L-methionine: R87, G112, E135, T166, and N188. The segment at P197–Q221 is disordered.

It belongs to the methyltransferase superfamily. METTL16/RlmF family.

The catalysed reaction is adenosine in U6 snRNA + S-adenosyl-L-methionine = N(6)-methyladenosine in U6 snRNA + S-adenosyl-L-homocysteine + H(+). Functionally, RNA N6-methyltransferase that mediates N6-methylation of adenine of U6 small nuclear RNA (U6 snRNA). This chain is U6 small nuclear RNA (adenine-(43)-N(6))-methyltransferase, found in Drosophila melanogaster (Fruit fly).